Reading from the N-terminus, the 286-residue chain is Pantothenate synthetase (286 aa).

ATP is bound at residue 30–37 (MGNLHSGH). The active-site Proton donor is histidine 37. A (R)-pantoate-binding site is contributed by glutamine 61. Glutamine 61 contacts beta-alanine. 149-152 (GQKD) serves as a coordination point for ATP. Glutamine 155 contributes to the (R)-pantoate binding site. ATP contacts are provided by residues valine 178 and 186 to 189 (LSSR).

The protein belongs to the pantothenate synthetase family. Homodimer.

The protein localises to the cytoplasm. It catalyses the reaction (R)-pantoate + beta-alanine + ATP = (R)-pantothenate + AMP + diphosphate + H(+). It functions in the pathway cofactor biosynthesis; (R)-pantothenate biosynthesis; (R)-pantothenate from (R)-pantoate and beta-alanine: step 1/1. Functionally, catalyzes the condensation of pantoate with beta-alanine in an ATP-dependent reaction via a pantoyl-adenylate intermediate. The sequence is that of Pantothenate synthetase from Pseudomonas fluorescens (strain ATCC BAA-477 / NRRL B-23932 / Pf-5).